A 621-amino-acid chain; its full sequence is Proton pump-interactor BIP131 (621 aa).

Residues 250–305 (IDEVKRDRQAVRDKIKVLEDQIHAVDGEIAALQDDLTAATARKDKAFEALNELRKT) are a coiled coil. The segment covering 374-387 (SRDGRMRNPDEKPI) has biased composition (basic and acidic residues). Residues 374–572 (SRDGRMRNPD…RSTVTKTKTP (199 aa)) form a disordered region. Residues 430–441 (KAPAKAAKAKQP) are compositionally biased toward low complexity. Over residues 448-516 (PDVHDDEPPK…AEKKLKEKEK (69 aa)) the composition is skewed to basic and acidic residues. A coiled-coil region spans residues 466-524 (EAKLKEMKRQEEIEKNKLALERKKKQAEKQAMKAAARAEKEAEKKLKEKEKKARKRSAT). A helical transmembrane segment spans residues 589 to 609 (WGAPMAALAAALVALLGALVY).

Belongs to the plant proton pump-interactor protein family. Interacts with BRI1.

Its subcellular location is the cell membrane. Its function is as follows. May regulate plasma membrane ATPase activity. This is Proton pump-interactor BIP131 from Oryza sativa subsp. japonica (Rice).